We begin with the raw amino-acid sequence, 370 residues long: Cyclic dehypoxanthine futalosine synthase (370 aa).

Residues 50 to 295 (TTFVIGRNVN…QSSWVTMGPE (246 aa)) form the Radical SAM core domain. The [4Fe-4S] cluster site is built by Cys-64, Cys-68, and Cys-71.

It belongs to the radical SAM superfamily. MqnC family. It depends on [4Fe-4S] cluster as a cofactor.

It carries out the reaction dehypoxanthine futalosine + S-adenosyl-L-methionine = cyclic dehypoxanthinylfutalosinate + 5'-deoxyadenosine + L-methionine + H(+). Its pathway is quinol/quinone metabolism; menaquinone biosynthesis. Its function is as follows. Radical SAM enzyme that catalyzes the cyclization of dehypoxanthine futalosine (DHFL) into cyclic dehypoxanthine futalosine (CDHFL), a step in the biosynthesis of menaquinone (MK, vitamin K2). This is Cyclic dehypoxanthine futalosine synthase from Halalkalibacterium halodurans (strain ATCC BAA-125 / DSM 18197 / FERM 7344 / JCM 9153 / C-125) (Bacillus halodurans).